A 209-amino-acid polypeptide reads, in one-letter code: Octanoyltransferase (209 aa).

Positions 30 to 209 constitute a BPL/LPL catalytic domain; it reads DNEPEIVYLV…IQTEFNKIFK (180 aa). Residues 69–76, 143–145, and 156–158 contribute to the substrate site; these read RGGKFTFH, AIG, and GIA. Catalysis depends on cysteine 174, which acts as the Acyl-thioester intermediate.

The protein belongs to the LipB family.

The protein resides in the cytoplasm. The catalysed reaction is octanoyl-[ACP] + L-lysyl-[protein] = N(6)-octanoyl-L-lysyl-[protein] + holo-[ACP] + H(+). The protein operates within protein modification; protein lipoylation via endogenous pathway; protein N(6)-(lipoyl)lysine from octanoyl-[acyl-carrier-protein]: step 1/2. Its function is as follows. Catalyzes the transfer of endogenously produced octanoic acid from octanoyl-acyl-carrier-protein onto the lipoyl domains of lipoate-dependent enzymes. Lipoyl-ACP can also act as a substrate although octanoyl-ACP is likely to be the physiological substrate. The protein is Octanoyltransferase of Rickettsia prowazekii (strain Madrid E).